The primary structure comprises 250 residues: ATP synthase subunit a (250 aa).

6 helical membrane passes run 25–45 (VSFTNSAAFMVGIVALIFFFL), 84–104 (VFFPLVFSLFVFVFVANVIGL), 115–135 (IVVTAALALLVIGTVVIYGFY), 141–161 (FLHLFVPSGVPAFLLPFIVLI), 187–209 (ALKVFAFFVVGLGSAGFLGWLGA), and 223–243 (ELLVAILQAYVFAVLTSIYLN).

Belongs to the ATPase A chain family. In terms of assembly, F-type ATPases have 2 components, CF(1) - the catalytic core - and CF(0) - the membrane proton channel. CF(1) has five subunits: alpha(3), beta(3), gamma(1), delta(1), epsilon(1). CF(0) has three main subunits: a(1), b(2) and c(9-12). The alpha and beta chains form an alternating ring which encloses part of the gamma chain. CF(1) is attached to CF(0) by a central stalk formed by the gamma and epsilon chains, while a peripheral stalk is formed by the delta and b chains.

The protein resides in the cell inner membrane. Functionally, key component of the proton channel; it plays a direct role in the translocation of protons across the membrane. The sequence is that of ATP synthase subunit a from Azorhizobium caulinodans (strain ATCC 43989 / DSM 5975 / JCM 20966 / LMG 6465 / NBRC 14845 / NCIMB 13405 / ORS 571).